Here is a 267-residue protein sequence, read N- to C-terminus: tRNA pseudouridine synthase A (267 aa).

Asp-53 serves as the catalytic Nucleophile. Substrate is bound at residue Tyr-114.

It belongs to the tRNA pseudouridine synthase TruA family. In terms of assembly, homodimer.

The enzyme catalyses uridine(38/39/40) in tRNA = pseudouridine(38/39/40) in tRNA. In terms of biological role, formation of pseudouridine at positions 38, 39 and 40 in the anticodon stem and loop of transfer RNAs. The protein is tRNA pseudouridine synthase A of Chlamydia trachomatis serovar L2b (strain UCH-1/proctitis).